Consider the following 122-residue polypeptide: UPF0102 protein Gmet_2864 (122 aa).

It belongs to the UPF0102 family.

The protein is UPF0102 protein Gmet_2864 of Geobacter metallireducens (strain ATCC 53774 / DSM 7210 / GS-15).